The primary structure comprises 214 residues: MTTLADLRTNYSRASLDAADVNPNPFVQFDVWFKEALDAQLPEPNTMTLATVDESGRPSARIVLIKGADERGFVFFTNYESRKGRELAHNPNAALLFYWIELERQVRVEGRIEKTSEEESDRYFASRPLGSRIGAWASEQSAVIESRALLEAREKEIGARFGENPPRPPHWGGYRLVPSSIEFWQGRPSRLHDRLLYTRDAASASGWKITRLAP.

Substrate is bound by residues 8-11 (RTNY) and Lys66. Residues 61–66 (RIVLIK), 76–77 (FT), Arg82, Lys83, and Gln105 each bind FMN. The substrate site is built by Tyr123, Arg127, and Ser131. FMN is bound by residues 140–141 (QS) and Trp184. 190–192 (RLH) is a substrate binding site. Position 194 (Arg194) interacts with FMN.

This sequence belongs to the pyridoxamine 5'-phosphate oxidase family. In terms of assembly, homodimer. The cofactor is FMN.

It carries out the reaction pyridoxamine 5'-phosphate + O2 + H2O = pyridoxal 5'-phosphate + H2O2 + NH4(+). The enzyme catalyses pyridoxine 5'-phosphate + O2 = pyridoxal 5'-phosphate + H2O2. It participates in cofactor metabolism; pyridoxal 5'-phosphate salvage; pyridoxal 5'-phosphate from pyridoxamine 5'-phosphate: step 1/1. The protein operates within cofactor metabolism; pyridoxal 5'-phosphate salvage; pyridoxal 5'-phosphate from pyridoxine 5'-phosphate: step 1/1. In terms of biological role, catalyzes the oxidation of either pyridoxine 5'-phosphate (PNP) or pyridoxamine 5'-phosphate (PMP) into pyridoxal 5'-phosphate (PLP). In Burkholderia mallei (strain NCTC 10247), this protein is Pyridoxine/pyridoxamine 5'-phosphate oxidase.